Consider the following 192-residue polypeptide: Visinin (192 aa).

A lipid anchor (N-myristoyl glycine) is attached at G2. EF-hand domains are found at residues 24 to 59 (TEEE…FFPN), 61 to 96 (EPQG…TSSG), 97 to 132 (KTHL…IFKM), and 146 to 181 (NSPQ…KNDA). Positions 74, 76, 78, 80, 85, 110, 112, 114, 116, 121, 164, 166, and 171 each coordinate Ca(2+).

The protein belongs to the recoverin family. In terms of tissue distribution, retinal cell specific protein.

Seems to be implicated in the pathway from retinal rod guanylate cyclase to rhodopsin. May be involved in the blocking of the phosphorylation of rhodopsin. The chain is Visinin from Gallus gallus (Chicken).